A 394-amino-acid chain; its full sequence is p-hydroxybenzoate hydroxylase (394 aa).

Residues Ser-13, Glu-32, Arg-42–Val-47, and Gln-102 each bind FAD. Residues Tyr-201, Ser-212–Arg-214, and Tyr-222 each bind substrate. FAD is bound at residue Asp-286. A substrate-binding site is contributed by Pro-293. Leu-299–Asn-300 lines the FAD pocket.

This sequence belongs to the aromatic-ring hydroxylase family. As to quaternary structure, homodimer. The cofactor is FAD.

It catalyses the reaction 4-hydroxybenzoate + NADPH + O2 + H(+) = 3,4-dihydroxybenzoate + NADP(+) + H2O. Its pathway is aromatic compound metabolism; benzoate degradation via hydroxylation; 3,4-dihydroxybenzoate from benzoate: step 2/2. Catalyzes the incorporation of an atom of dioxygen into p-hydroxybenzoate (p-OHB) to form 3,4-dihydroxybenzoate (3,4DOHB). The reaction occurs in two parts: reduction of the flavin adenine dinucleotide (FAD) in the enzyme by reduced nicotinamide adenine dinucleotide phosphate (NADPH) in response to binding p-hydroxybenzoate to the enzyme and oxidation of reduced FAD with oxygen to form a hydroperoxide, which then oxygenates p-hydroxybenzoate. This chain is p-hydroxybenzoate hydroxylase (pobA), found in Pseudomonas fluorescens.